Reading from the N-terminus, the 131-residue chain is Profilin (131 aa).

It belongs to the profilin family. As to quaternary structure, occurs in many kinds of cells as a complex with monomeric actin in a 1:1 ratio.

The protein localises to the cytoplasm. Its subcellular location is the cytoskeleton. Binds to actin and affects the structure of the cytoskeleton. At high concentrations, profilin prevents the polymerization of actin, whereas it enhances it at low concentrations. By binding to PIP2, it inhibits the formation of IP3 and DG. The sequence is that of Profilin from Litchi chinensis (Lychee).